Reading from the N-terminus, the 409-residue chain is Nucleoprotein (409 aa).

4 disordered regions span residues 1–32, 44–69, 121–194, and 238–259; these read MASG…SSGN, LNSP…QQHG, ADVK…GSED, and VDQV…DKMN. The RNA-binding stretch occupies residues 29–160; the sequence is SSGNASWFQA…GNFRWDFIPL (132 aa). Positions 31-156 constitute a CoV N NTD domain; that stretch reads GNASWFQAIK…GGPDGNFRWD (126 aa). The segment covering 162–179 has biased composition (low complexity); the sequence is RGRSGRSTAASSAASSRP. Basic and acidic residues-rich tracts occupy residues 180–192 and 247–259; these read PSRE…RSGS and KGKE…DKMN. Phosphoserine; by host occurs at positions 190 and 192. One can recognise a CoV N CTD domain in the interval 215–331; that stretch reads TKAKADEMAH…QCVDGVGTRP (117 aa). A dimerization region spans residues 226–333; sequence RYCKRTIPPG…VDGVGTRPKD (108 aa). A disulfide bridge connects residues cysteine 320 and cysteine 323. A disordered region spans residues 326–409; that stretch reads GVGTRPKDDE…GDSALGENEL (84 aa). Positions 341-356 are enriched in low complexity; that stretch reads RSSSRPATRTSSPAPR. Positions 358-367 are enriched in basic residues; it reads QRLKKEKRPK. Positions 368-384 are enriched in basic and acidic residues; sequence KQDDEVDKALTSDEERN. Threonine 378 is modified (phosphothreonine; by host). The residue at position 379 (serine 379) is a Phosphoserine; by host.

It belongs to the gammacoronavirus nucleocapsid protein family. In terms of assembly, homooligomer. Both monomeric and oligomeric forms interact with RNA. Interacts with protein M. Interacts with NSP3; this interaction serves to tether the genome to the newly translated replicase-transcriptase complex at a very early stage of infection. In terms of processing, ADP-ribosylated. The ADP-ribosylation is retained in the virion during infection. Post-translationally, phosphorylated on serine and threonine residues.

Its subcellular location is the virion. The protein resides in the host endoplasmic reticulum-Golgi intermediate compartment. It localises to the host Golgi apparatus. Packages the positive strand viral genome RNA into a helical ribonucleocapsid (RNP) and plays a fundamental role during virion assembly through its interactions with the viral genome and membrane protein M. Plays an important role in enhancing the efficiency of subgenomic viral RNA transcription as well as viral replication. The polypeptide is Nucleoprotein (Gallus gallus (Chicken)).